The sequence spans 271 residues: MAGLEVLFASAAPSMSCPQDALVCFLHWEVVTNGYYALGTGDQPGPSDKKSELLPAKWNSNKELYALRYESKDGARKLLLKAVSVENGMIINVLELGTQQVADLTLNLDDYIDAEDLSDFHRTYKNSEELRSQIRSGIITPIHEQWEKARANSPPREFPPATAREVDPLQISSHRPHTSRQPAWRDPLSPFAVGGDDLDPFGCQRGGMIVDPLRSGFPRVLIDPSSGLPNRLPPGAVPPGARFDPFGPIGTSPSGPNPDHLPPPGYDDMYL.

Ala-2 bears the N-acetylalanine mark. The important for homodimerization and interaction with FBXO7 stretch occupies residues 2–150; the sequence is AGLEVLFASA…PIHEQWEKAR (149 aa). Ser-153 and Ser-189 each carry phosphoserine. Arg-205 is modified (omega-N-methylarginine). Arg-219 carries the post-translational modification Asymmetric dimethylarginine. The interval 226–271 is disordered; sequence SGLPNRLPPGAVPPGARFDPFGPIGTSPSGPNPDHLPPPGYDDMYL. The residue at position 231 (Arg-231) is an Omega-N-methylarginine. Residue Ser-252 is modified to Phosphoserine. The span at 255 to 265 shows a compositional bias: pro residues; that stretch reads GPNPDHLPPPG.

This sequence belongs to the proteasome inhibitor PI31 family. Monomer and homodimer. Interacts with FBXO7.

It is found in the cytoplasm. It localises to the endoplasmic reticulum. In terms of biological role, plays an important role in control of proteasome function. Inhibits the hydrolysis of protein and peptide substrates by the 20S proteasome. Also inhibits the activation of the proteasome by the proteasome regulatory proteins PA700 and PA28. This Mus musculus (Mouse) protein is Proteasome inhibitor PI31 subunit (Psmf1).